The following is a 258-amino-acid chain: UPF0246 protein CGSHiGG_08495 (258 aa).

This sequence belongs to the UPF0246 family.

The polypeptide is UPF0246 protein CGSHiGG_08495 (Haemophilus influenzae (strain PittGG)).